We begin with the raw amino-acid sequence, 526 residues long: Rho guanine nucleotide exchange factor 3 (526 aa).

A disordered region spans residues 20–40 (ELPPASGPAKDAEEPSNKRVK). A phosphoserine mark is found at Ser47 and Ser70. The DH domain maps to 122–304 (KRQEAIFELS…QGIVAEINTK (183 aa)). A PH domain is found at 291–449 (INIIQGIVAE…WLNCIRQAKE (159 aa)). A disordered region spans residues 464–526 (EGSFLNPTTG…GNSRHGESNV (63 aa)). The segment covering 466–475 (SFLNPTTGSR) has biased composition (polar residues).

As to quaternary structure, interacts with RHOA and RHOB. In terms of tissue distribution, widely expressed. Highest levels are found in adult brain and skeletal muscle. Lower levels are found in heart and kidney.

Its subcellular location is the cytoplasm. Functionally, acts as a guanine nucleotide exchange factor (GEF) for RhoA and RhoB GTPases. This chain is Rho guanine nucleotide exchange factor 3 (ARHGEF3), found in Homo sapiens (Human).